Consider the following 91-residue polypeptide: UPF0250 protein mma_3250 (91 aa).

The protein belongs to the UPF0250 family.

The protein is UPF0250 protein mma_3250 of Janthinobacterium sp. (strain Marseille) (Minibacterium massiliensis).